The sequence spans 169 residues: uncharacterized protein (169 aa).

One can recognise an HD domain in the interval 18 to 130 (VVEHCLAVSE…VAHADNLIFG (113 aa)).

This is an uncharacterized protein from Methanocaldococcus jannaschii (strain ATCC 43067 / DSM 2661 / JAL-1 / JCM 10045 / NBRC 100440) (Methanococcus jannaschii).